We begin with the raw amino-acid sequence, 124 residues long: LOB domain-containing protein 9 (124 aa).

The region spanning 11–113 (APCALCTTKN…IYLNELKEKI (103 aa)) is the LOB domain.

Belongs to the LOB domain-containing protein family.

The polypeptide is LOB domain-containing protein 9 (LBD9) (Arabidopsis thaliana (Mouse-ear cress)).